Consider the following 213-residue polypeptide: Putative 3-methyladenine DNA glycosylase (213 aa).

Residues 165–187 (GTPVPPDQVRNGPRTGVSGDGGV) are disordered.

It belongs to the DNA glycosylase MPG family.

This chain is Putative 3-methyladenine DNA glycosylase, found in Streptomyces avermitilis (strain ATCC 31267 / DSM 46492 / JCM 5070 / NBRC 14893 / NCIMB 12804 / NRRL 8165 / MA-4680).